The following is a 290-amino-acid chain: UPF0761 membrane protein CKO_03126 (290 aa).

6 helical membrane-spanning segments follow: residues 44 to 64 (LLSL…FPMF), 104 to 124 (VGAC…DSAL), 140 to 160 (FAVY…SLAI), 183 to 203 (VFPL…VPTT), 210 to 230 (AVVG…GFAL), and 244 to 264 (VLAV…IVLL).

It belongs to the UPF0761 family.

It localises to the cell inner membrane. In Citrobacter koseri (strain ATCC BAA-895 / CDC 4225-83 / SGSC4696), this protein is UPF0761 membrane protein CKO_03126.